We begin with the raw amino-acid sequence, 394 residues long: NAD(P)H-quinone oxidoreductase subunit H (394 aa).

This sequence belongs to the complex I 49 kDa subunit family. NDH-1 can be composed of about 15 different subunits; different subcomplexes with different compositions have been identified which probably have different functions.

The protein localises to the cellular thylakoid membrane. The enzyme catalyses a plastoquinone + NADH + (n+1) H(+)(in) = a plastoquinol + NAD(+) + n H(+)(out). The catalysed reaction is a plastoquinone + NADPH + (n+1) H(+)(in) = a plastoquinol + NADP(+) + n H(+)(out). Its function is as follows. NDH-1 shuttles electrons from an unknown electron donor, via FMN and iron-sulfur (Fe-S) centers, to quinones in the respiratory and/or the photosynthetic chain. The immediate electron acceptor for the enzyme in this species is believed to be plastoquinone. Couples the redox reaction to proton translocation, and thus conserves the redox energy in a proton gradient. Cyanobacterial NDH-1 also plays a role in inorganic carbon-concentration. The polypeptide is NAD(P)H-quinone oxidoreductase subunit H (Trichormus variabilis (strain ATCC 29413 / PCC 7937) (Anabaena variabilis)).